The chain runs to 597 residues: Cysteine/serine-rich nuclear protein 3 (597 aa).

2 disordered regions span residues 22-64 and 348-407; these read EDVD…TPSS and CQGD…GFVE. Residues 42–52 are compositionally biased toward low complexity; it reads SSESADSGDSV. Residues 53 to 64 are compositionally biased toward polar residues; sequence NPSTSNHFTPSS. Residues 348 to 359 show a composition bias toward acidic residues; sequence CQGDEEEEEEDG. Polar residues predominate over residues 361-376; sequence SFCSGATDSSTQSLAP. The segment covering 378–401 has biased composition (acidic residues); the sequence is ESDEEEEEEEEEEEEEEEDDDDDK.

It belongs to the AXUD1 family. Detected only in the brain of 15 dpc, 18 dpc, newborn and P6 mice (at protein level).

The protein localises to the nucleus. In terms of biological role, binds to the consensus sequence 5'-AGAGTG-3' and has transcriptional activator activity. Plays a role in apoptosis. The chain is Cysteine/serine-rich nuclear protein 3 (Csrnp3) from Mus musculus (Mouse).